The chain runs to 251 residues: Small ribosomal subunit protein uS2 (251 aa).

The residue at position 2 (S2) is an N-acetylserine. Residues 209–251 form a disordered region; that stretch reads EIEQQTAEEAAQEAGEEEAKEEVTEEQTEAAEWAQENADNVEW. Residues 218–237 show a composition bias toward acidic residues; it reads AAQEAGEEEAKEEVTEEQTE. Positions 238–251 are enriched in low complexity; it reads AAEWAQENADNVEW.

The protein belongs to the universal ribosomal protein uS2 family. As to quaternary structure, component of the small ribosomal subunit. Mature ribosomes consist of a small (40S) and a large (60S) subunit. The 40S subunit contains about 33 different proteins and 1 molecule of RNA (18S). The 60S subunit contains about 49 different proteins and 3 molecules of RNA (25S, 5.8S and 5S). Interacts with RPS21.

Its subcellular location is the cytoplasm. Its function is as follows. Required for the assembly and/or stability of the 40S ribosomal subunit. Required for the processing of the 20S rRNA-precursor to mature 18S rRNA in a late step of the maturation of 40S ribosomal subunits. The chain is Small ribosomal subunit protein uS2 from Candida glabrata (strain ATCC 2001 / BCRC 20586 / JCM 3761 / NBRC 0622 / NRRL Y-65 / CBS 138) (Yeast).